Here is a 271-residue protein sequence, read N- to C-terminus: uncharacterized protein (271 aa).

An N-terminal signal peptide occupies residues 1-22 (MARELLFLACAIVIADSWPAKA).

This is an uncharacterized protein from Sinorhizobium fredii (strain NBRC 101917 / NGR234).